A 373-amino-acid chain; its full sequence is Unsaturated rhamnogalacturonyl hydrolase YteR (373 aa).

Substrate-binding positions include 40-41 (HY), D88, and 132-136 (HKDGY). The active-site Proton donor is the D143. Substrate is bound by residues 213-217 (RSIGW) and 333-334 (TS).

This sequence belongs to the glycosyl hydrolase 105 family. In terms of assembly, monomer.

The protein localises to the cytoplasm. The catalysed reaction is 2-O-(4-deoxy-beta-L-threo-hex-4-enopyranuronosyl)-alpha-L-rhamnose + H2O = 5-dehydro-4-deoxy-D-glucuronate + L-rhamnopyranose. In terms of biological role, catalyzes the hydrolysis of unsaturated rhamnogalacturonan disaccharide to yield unsaturated D-galacturonic acid and L-rhamnose. It cannot act on unsaturated glucuronyl hydrolase (UGL) substrates containing unsaturated D-glucuronic acid at the non-reducing terminus, although the active pockets of YesR and UGL are very similar. This chain is Unsaturated rhamnogalacturonyl hydrolase YteR (yteR), found in Bacillus subtilis (strain 168).